The primary structure comprises 327 residues: Phenylalanine--tRNA ligase alpha subunit (327 aa).

Mg(2+) is bound at residue E252.

This sequence belongs to the class-II aminoacyl-tRNA synthetase family. Phe-tRNA synthetase alpha subunit type 1 subfamily. Tetramer of two alpha and two beta subunits. It depends on Mg(2+) as a cofactor.

It is found in the cytoplasm. It catalyses the reaction tRNA(Phe) + L-phenylalanine + ATP = L-phenylalanyl-tRNA(Phe) + AMP + diphosphate + H(+). The chain is Phenylalanine--tRNA ligase alpha subunit from Glaesserella parasuis serovar 5 (strain SH0165) (Haemophilus parasuis).